Reading from the N-terminus, the 191-residue chain is UPF0312 protein Shewana3_1179 (191 aa).

The first 22 residues, 1–22 (MKKQLLAALIGGSLLAPMAASA), serve as a signal peptide directing secretion.

Belongs to the UPF0312 family. Type 1 subfamily.

It is found in the periplasm. This chain is UPF0312 protein Shewana3_1179, found in Shewanella sp. (strain ANA-3).